Reading from the N-terminus, the 81-residue chain is Small ribosomal subunit protein bS20 (81 aa).

Basic residues predominate over residues 1–11 (MPNIKSQKKRV). The segment at 1–20 (MPNIKSQKKRVLTNEKSRAS) is disordered.

It belongs to the bacterial ribosomal protein bS20 family.

Its function is as follows. Binds directly to 16S ribosomal RNA. This is Small ribosomal subunit protein bS20 from Mesoplasma florum (strain ATCC 33453 / NBRC 100688 / NCTC 11704 / L1) (Acholeplasma florum).